Reading from the N-terminus, the 693-residue chain is Elongation factor G (693 aa).

In terms of domain architecture, tr-type G spans 6–286; the sequence is KYTRNIGIAA…AICRYLPSPI (281 aa). Residues 15 to 22, 83 to 87, and 137 to 140 contribute to the GTP site; these read AHIDAGKT, DTPGH, and NKMD.

Belongs to the TRAFAC class translation factor GTPase superfamily. Classic translation factor GTPase family. EF-G/EF-2 subfamily.

It is found in the cytoplasm. Catalyzes the GTP-dependent ribosomal translocation step during translation elongation. During this step, the ribosome changes from the pre-translocational (PRE) to the post-translocational (POST) state as the newly formed A-site-bound peptidyl-tRNA and P-site-bound deacylated tRNA move to the P and E sites, respectively. Catalyzes the coordinated movement of the two tRNA molecules, the mRNA and conformational changes in the ribosome. This Karelsulcia muelleri (strain GWSS) (Sulcia muelleri) protein is Elongation factor G.